The chain runs to 209 residues: GTP-binding protein RHO1 (209 aa).

Serine 2 is modified (N-acetylserine). GTP is bound at residue 17 to 24 (GDGACGKT). An Effector region motif is present at residues 39-47 (YVPTVFENY). Residues 64–68 (DTAGQ) and 122–125 (CKVD) contribute to the GTP site. Positions 187 to 209 (KSKTNGKAKKNTTEKKKKKCVLL) are disordered. Basic residues predominate over residues 190-209 (TNGKAKKNTTEKKKKKCVLL). Position 206 is a cysteine methyl ester (cysteine 206). A lipid anchor (S-geranylgeranyl cysteine) is attached at cysteine 206. The propeptide at 207–209 (VLL) is removed in mature form.

The protein belongs to the small GTPase superfamily. Rho family. In terms of assembly, interacts with BEM4; the interaction is direct. Interacts with SEC3; the interaction is direct. Interacts with the GAP BAG7. Interacts with the GAP LRG1. Interacts with the GAP SAC7. Interacts with the GAP RDI1. Interacts with the 1,3-beta-glucan synthase component FKS1. Interacts with the protein kinase PKC1. Interacts with the G protein beta subunit STE4. Interacts with SKN7. Interacts with TUS1. Interacts with BNI1.

Its subcellular location is the cell membrane. The protein localises to the endosome membrane. It is found in the peroxisome membrane. It carries out the reaction GTP + H2O = GDP + phosphate + H(+). With respect to regulation, alternates between an inactive form bound to GDP and an active form bound to GTP. Activated by the guanine nucleotide-exchange factors (GEFs) ROM1, ROM2 and TUS1, and inactivated by GTPase-activating proteins (GAPs) BAG7, BEM2, LRG1, and SAC7, and the Rho GDP-dissociation inhibitor RDI1. The different GAPs regulate RHO1 in a target-specific manner. In terms of biological role, acts as a central regulator in the cell wall integrity signaling pathway, which is regulated by the cell cycle and in response to various types of cell wall stress. Integrates signals from different cell surface sensors, and activates a set of effectors, regulating processes including beta-glucan synthesis at the site of wall remodeling, gene expression related to cell wall biogenesis, organization of the actin cytoskeleton, and protein- and secretory vesicle-targeting to the growth site. Activates the protein kinase C (PKC1) MAP kinase cascade, the beta-1,3-glucan synthase (FKS1), the formin BNI1, the exocyst component SEC3 and the transcription factor SKN7. This chain is GTP-binding protein RHO1 (RHO1), found in Saccharomyces cerevisiae (strain ATCC 204508 / S288c) (Baker's yeast).